Here is a 291-residue protein sequence, read N- to C-terminus: Protease HtpX homolog (291 aa).

2 consecutive transmembrane segments (helical) span residues 4 to 24 (VILFLLTNFAVMLVLSVTARI) and 38 to 58 (MGMLLVFAALIGFGGSFISLL). His-144 serves as a coordination point for Zn(2+). Residue Glu-145 is part of the active site. Position 148 (His-148) interacts with Zn(2+). 2 consecutive transmembrane segments (helical) span residues 159–179 (LIQGVLNTFVIFLSRIIAYAV) and 199–219 (ISSIACEILFGILASIVVMFF). Glu-224 lines the Zn(2+) pocket.

It belongs to the peptidase M48B family. Zn(2+) is required as a cofactor.

The protein localises to the cell inner membrane. This Pelodictyon phaeoclathratiforme (strain DSM 5477 / BU-1) protein is Protease HtpX homolog.